The chain runs to 460 residues: NADH-ubiquinone oxidoreductase chain 4 (460 aa).

A run of 13 helical transmembrane segments spans residues 22-42 (WLWP…LSWL), 61-81 (PLST…ILAS), 97-114 (YISL…AFSA), 118-140 (IMFY…RWGN), 149-169 (TYFL…LLLL), 196-216 (IWWT…GVHL), 226-246 (PIAG…YGMM), 259-279 (LSYP…SICM), 286-305 (SLIA…GILI), 309-331 (WGFT…LFCL), 352-372 (MALP…LALP), 395-415 (IALT…MFLM), and 437-457 (LLIA…ELIW).

It belongs to the complex I subunit 4 family.

The protein localises to the mitochondrion membrane. It carries out the reaction a ubiquinone + NADH + 5 H(+)(in) = a ubiquinol + NAD(+) + 4 H(+)(out). Core subunit of the mitochondrial membrane respiratory chain NADH dehydrogenase (Complex I) that is believed to belong to the minimal assembly required for catalysis. Complex I functions in the transfer of electrons from NADH to the respiratory chain. The immediate electron acceptor for the enzyme is believed to be ubiquinone. This Tetraodon nigroviridis (Spotted green pufferfish) protein is NADH-ubiquinone oxidoreductase chain 4 (MT-ND4).